Here is a 142-residue protein sequence, read N- to C-terminus: Transcriptional regulator MraZ (142 aa).

SpoVT-AbrB domains follow at residues Thr5 to Glu47 and Ala76 to Ala119.

It belongs to the MraZ family. As to quaternary structure, forms oligomers.

It localises to the cytoplasm. The protein resides in the nucleoid. This Salinispora arenicola (strain CNS-205) protein is Transcriptional regulator MraZ.